The sequence spans 255 residues: Thiazole synthase (255 aa).

The active-site Schiff-base intermediate with DXP is the Lys-96. Residues Gly-157, 183 to 184 (AG), and 205 to 206 (NT) each bind 1-deoxy-D-xylulose 5-phosphate.

Belongs to the ThiG family. As to quaternary structure, homotetramer. Forms heterodimers with either ThiH or ThiS.

Its subcellular location is the cytoplasm. The catalysed reaction is [ThiS sulfur-carrier protein]-C-terminal-Gly-aminoethanethioate + 2-iminoacetate + 1-deoxy-D-xylulose 5-phosphate = [ThiS sulfur-carrier protein]-C-terminal Gly-Gly + 2-[(2R,5Z)-2-carboxy-4-methylthiazol-5(2H)-ylidene]ethyl phosphate + 2 H2O + H(+). It participates in cofactor biosynthesis; thiamine diphosphate biosynthesis. Functionally, catalyzes the rearrangement of 1-deoxy-D-xylulose 5-phosphate (DXP) to produce the thiazole phosphate moiety of thiamine. Sulfur is provided by the thiocarboxylate moiety of the carrier protein ThiS. In vitro, sulfur can be provided by H(2)S. The polypeptide is Thiazole synthase (Staphylococcus saprophyticus subsp. saprophyticus (strain ATCC 15305 / DSM 20229 / NCIMB 8711 / NCTC 7292 / S-41)).